The following is a 235-amino-acid chain: Exotoxin type C (235 aa).

A signal peptide spans 1–27; the sequence is MKKINIIKIVFIITVILISTISPIIKS. Positions 194, 228, and 230 each coordinate Zn(2+).

This sequence belongs to the staphylococcal/streptococcal toxin family.

In terms of biological role, superantigen that acts as a causative agent of the symptoms associated with scarlet fever. Has been associated with streptococcal toxic shock-like disease and may play a role in the early events of rheumatic fever. Superantigens cross-link major histocompatibility complex (MHC) class II and T-cell receptor (TCR) molecules, resulting in an overstimulation of T-cells associated with a massive release of pyrogenic and inflammatory cytokines. The polypeptide is Exotoxin type C (speC) (Streptococcus pyogenes serotype M1).